A 375-amino-acid polypeptide reads, in one-letter code: Putative glutamate--cysteine ligase 2 (375 aa).

This sequence belongs to the glutamate--cysteine ligase type 2 family. YbdK subfamily.

It carries out the reaction L-cysteine + L-glutamate + ATP = gamma-L-glutamyl-L-cysteine + ADP + phosphate + H(+). Functionally, ATP-dependent carboxylate-amine ligase which exhibits weak glutamate--cysteine ligase activity. The polypeptide is Putative glutamate--cysteine ligase 2 (Sorangium cellulosum (strain So ce56) (Polyangium cellulosum (strain So ce56))).